Consider the following 301-residue polypeptide: Homoserine O-acetyltransferase (301 aa).

Cys142 serves as the catalytic Acyl-thioester intermediate. 2 residues coordinate substrate: Lys163 and Ser192. Catalysis depends on His235, which acts as the Proton acceptor. Residue Glu237 is part of the active site. Arg249 is a binding site for substrate.

Belongs to the MetA family.

It is found in the cytoplasm. The catalysed reaction is L-homoserine + acetyl-CoA = O-acetyl-L-homoserine + CoA. The protein operates within amino-acid biosynthesis; L-methionine biosynthesis via de novo pathway; O-acetyl-L-homoserine from L-homoserine: step 1/1. In terms of biological role, transfers an acetyl group from acetyl-CoA to L-homoserine, forming acetyl-L-homoserine. The sequence is that of Homoserine O-acetyltransferase from Bacillus cereus (strain AH187).